The sequence spans 139 residues: MRIMGLDVGSKTVGVAISDPLGFTAQGLEIIPIHEEKGEFGLERLGELVKEYKVDKFVIGLPKNMNNTSGPRVEASQAYGQRIAELFGLPVDYQDERLTTVAAERMLVEQADISRSKRKKVIDKLAAQLILQNYLDRNF.

This sequence belongs to the YqgF nuclease family.

It localises to the cytoplasm. Functionally, could be a nuclease involved in processing of the 5'-end of pre-16S rRNA. This Streptococcus sanguinis (strain SK36) protein is Putative pre-16S rRNA nuclease.